We begin with the raw amino-acid sequence, 294 residues long: rRNA 2'-O-methyltransferase fibrillarin (294 aa).

Residues 1 to 62 (MGKDFKSGGG…GKFGAKGPRG (62 aa)) are disordered. The segment covering 20 to 56 (GPGGPGGRPFNKGPGGPGGPGGKFGGGRPGGPGGKFG) has biased composition (gly residues). R27, R47, and R61 each carry asymmetric dimethylarginine. Residues 151 to 152 (TT), 170 to 171 (EF), 195 to 196 (DA), and 215 to 218 (DVAQ) contribute to the S-adenosyl-L-methionine site.

It belongs to the methyltransferase superfamily. Fibrillarin family. In terms of assembly, component of box C/D small nucleolar ribonucleoprotein (snoRNP) particles. It is associated with the U3, U8 and U13 small nuclear RNAs. Post-translationally, by homology to other fibrillarins, some or all of the N-terminal domain arginines are modified to asymmetric dimethylarginine (DMA).

The protein resides in the nucleus. It localises to the nucleolus. The catalysed reaction is L-glutaminyl-[histone H2A] + S-adenosyl-L-methionine = N(5)-methyl-L-glutaminyl-[histone H2A] + S-adenosyl-L-homocysteine + H(+). Its function is as follows. S-adenosyl-L-methionine-dependent methyltransferase that has the ability to methylate both RNAs and proteins. Involved in pre-rRNA processing. Utilizes the methyl donor S-adenosyl-L-methionine to catalyze the site-specific 2'-hydroxyl methylation of ribose moieties in pre-ribosomal RNA. Site specificity is provided by a guide RNA that base pairs with the substrate. Methylation occurs at a characteristic distance from the sequence involved in base pairing with the guide RNA. Also acts as a protein methyltransferase by mediating methylation of 'Gln-105' of histone H2A (H2AQ105me), a modification that impairs binding of the FACT complex and is specifically present at 35S ribosomal DNA locus. In Tetrahymena thermophila, this protein is rRNA 2'-O-methyltransferase fibrillarin (FIB).